Consider the following 518-residue polypeptide: GMP synthase [glutamine-hydrolyzing] (518 aa).

The region spanning 8 to 201 is the Glutamine amidotransferase type-1 domain; that stretch reads TVLIIDFGSQ…VHKISGLKGN (194 aa). Residue Cys-85 is the Nucleophile of the active site. Residues His-175 and Glu-177 contribute to the active site. A GMPS ATP-PPase domain is found at 202-393; the sequence is WSMASYRDQA…LGLPEQFLGR (192 aa). 229–235 lines the ATP pocket; sequence SGGVDSS.

In terms of assembly, homodimer.

It carries out the reaction XMP + L-glutamine + ATP + H2O = GMP + L-glutamate + AMP + diphosphate + 2 H(+). It participates in purine metabolism; GMP biosynthesis; GMP from XMP (L-Gln route): step 1/1. Its function is as follows. Catalyzes the synthesis of GMP from XMP. This is GMP synthase [glutamine-hydrolyzing] from Bartonella quintana (strain Toulouse) (Rochalimaea quintana).